Consider the following 157-residue polypeptide: S-ribosylhomocysteine lyase (157 aa).

The Fe cation site is built by histidine 54, histidine 58, and cysteine 126.

This sequence belongs to the LuxS family. In terms of assembly, homodimer. Fe cation serves as cofactor.

The catalysed reaction is S-(5-deoxy-D-ribos-5-yl)-L-homocysteine = (S)-4,5-dihydroxypentane-2,3-dione + L-homocysteine. In terms of biological role, involved in the synthesis of autoinducer 2 (AI-2) which is secreted by bacteria and is used to communicate both the cell density and the metabolic potential of the environment. The regulation of gene expression in response to changes in cell density is called quorum sensing. Catalyzes the transformation of S-ribosylhomocysteine (RHC) to homocysteine (HC) and 4,5-dihydroxy-2,3-pentadione (DPD). The protein is S-ribosylhomocysteine lyase of Bacillus anthracis (strain A0248).